The chain runs to 412 residues: GATOR complex protein NPRL2 (412 aa).

The protein belongs to the NPR2 family. In terms of assembly, component of the GATOR complex consisting of mio, Nup44A/Seh1, Im11, Nplr3, Nplr2, Wdr24, Wdr59 and Sec13. Within the GATOR complex, probable component of the GATOR1 subcomplex which is likely composed of Iml1, Nplr2 and Nplr3. Interacts with Nprl3.

The protein localises to the cytoplasm. It localises to the lysosome. Its function is as follows. An essential component of the GATOR subcomplex GATOR1 which functions as an inhibitor of the amino acid-sensing branch of the TORC1 signaling pathway. The two GATOR subcomplexes, GATOR1 and GATOR2, regulate the TORC1 pathway in order to mediate metabolic homeostasis, female gametogenesis and the response to amino acid limitation and complete starvation. The function of GATOR1 in negatively regulating the TORC1 pathway is essential for maintaining baseline levels of TORC1 activity under nutrient rich conditions, and for promoting survival during amino acid or complete starvation by inhibiting TORC1-dependent cell growth and promoting catabolic metabolism and autophagy. In addition, this inhibition of TORC1 is necessary to maintain female fertility under normal conditions and during periods of nutrient stress. GATOR1 and GATOR2 act at different stages of oogenesis to regulate TORC1 in order to control meiotic entry and promote oocyte growth and development. After exactly four mitotic cyst divisions, the GATOR1 complex members (Iml1, Nprl2 and Nprl3) down-regulate TORC1 to slow cellular metabolism and promote the mitotic/meiotic transition. At later stages of oogenesis, the mio and Nup44A components of the GATOR2 complex inhibit GATOR1 and thus activate TORC1 to promote meiotic progression, and drive oocyte growth and development. In Drosophila melanogaster (Fruit fly), this protein is GATOR complex protein NPRL2.